The primary structure comprises 538 residues: Sucrose transport protein SUT1 (538 aa).

Topologically, residues M1–R52 are cytoplasmic. A helical membrane pass occupies residues L53–L73. The Extracellular segment spans residues L74–L81. A helical membrane pass occupies residues G82 to V102. At Q103–Y123 the chain is on the cytoplasmic side. A helical transmembrane segment spans residues I124–I144. Over G145–R162 the chain is Extracellular. A helical membrane pass occupies residues W163–V183. Residues Q184 to H198 lie on the Cytoplasmic side of the membrane. A helical transmembrane segment spans residues G199–Y219. Residues S220–K247 are Extracellular-facing. Residues G248–A268 traverse the membrane as a helical segment. Residues K269–T306 lie on the Cytoplasmic side of the membrane. The helical transmembrane segment at G307 to L327 threads the bilayer. Residues Y328–R357 are Extracellular-facing. A helical transmembrane segment spans residues A358 to E378. Residues P379 to V388 are Cytoplasmic-facing. A helical transmembrane segment spans residues V389–F409. The Extracellular segment spans residues W410–C433. A helical transmembrane segment spans residues L434–V454. Over T455–T470 the chain is Cytoplasmic. The helical transmembrane segment at G471 to W491 threads the bilayer. At D492–N499 the chain is on the extracellular side. A helical membrane pass occupies residues I500–L520. Residues L521–H538 lie on the Cytoplasmic side of the membrane.

Belongs to the glycoside-pentoside-hexuronide (GPH) cation symporter transporter (TC 2.A.2.4) family. Homodimer.

The protein resides in the cell membrane. The protein operates within glycan biosynthesis; sucrose metabolism. In terms of biological role, responsible for the transport of sucrose into the cell, with the concomitant uptake of protons (symport system). May also transport other glucosides. May be required for apoplastic phloem sucrose loading in source tissues (e.g. leaves) in order to transport it to sink tissues (e.g. roots, flowers). The polypeptide is Sucrose transport protein SUT1 (SUT1) (Oryza sativa subsp. indica (Rice)).